The primary structure comprises 582 residues: 2-isopropylmalate synthase (582 aa).

The region spanning 40–314 (PRWCAVDLRD…DPMIDFSDID (275 aa)) is the Pyruvate carboxyltransferase domain. Positions 49, 253, 255, and 289 each coordinate Mg(2+). The segment at 456–582 (SPAGHPGGQW…NRAIRDNQVD (127 aa)) is regulatory domain.

It belongs to the alpha-IPM synthase/homocitrate synthase family. LeuA type 2 subfamily. In terms of assembly, homodimer. The cofactor is Mg(2+).

It localises to the cytoplasm. It catalyses the reaction 3-methyl-2-oxobutanoate + acetyl-CoA + H2O = (2S)-2-isopropylmalate + CoA + H(+). Its pathway is amino-acid biosynthesis; L-leucine biosynthesis; L-leucine from 3-methyl-2-oxobutanoate: step 1/4. Its function is as follows. Catalyzes the condensation of the acetyl group of acetyl-CoA with 3-methyl-2-oxobutanoate (2-ketoisovalerate) to form 3-carboxy-3-hydroxy-4-methylpentanoate (2-isopropylmalate). The polypeptide is 2-isopropylmalate synthase (Renibacterium salmoninarum (strain ATCC 33209 / DSM 20767 / JCM 11484 / NBRC 15589 / NCIMB 2235)).